A 368-amino-acid polypeptide reads, in one-letter code: Glucose 1-dehydrogenase 2 (368 aa).

Cysteine 41 contributes to the Zn(2+) binding site. Substrate is bound at residue threonine 43. Zn(2+)-binding residues include histidine 68 and glutamate 69. Asparagine 91 lines the substrate pocket. Zn(2+)-binding residues include cysteine 95, cysteine 98, cysteine 101, cysteine 109, and glutamine 152. Substrate is bound by residues glutamine 152 and aspartate 156. NADP(+) is bound by residues 213–215, 279–281, 307–309, and lysine 356; these read NRR, FGF, and LDN. Asparagine 309 lines the substrate pocket.

This sequence belongs to the zinc-containing alcohol dehydrogenase family. Glucose 1-dehydrogenase subfamily. It depends on Zn(2+) as a cofactor.

It carries out the reaction D-glucose + NAD(+) = D-glucono-1,5-lactone + NADH + H(+). The enzyme catalyses D-glucose + NADP(+) = D-glucono-1,5-lactone + NADPH + H(+). Its function is as follows. Catalyzes the NAD(P)(+)-dependent oxidation of D-glucose to D-gluconate via gluconolactone. Can utilize both NAD(+) and NADP(+) as electron acceptor. Is involved in the degradation of glucose through a non-phosphorylative variant of the Entner-Doudoroff pathway. In Saccharolobus solfataricus (strain ATCC 35092 / DSM 1617 / JCM 11322 / P2) (Sulfolobus solfataricus), this protein is Glucose 1-dehydrogenase 2.